We begin with the raw amino-acid sequence, 197 residues long: Guanylate kinase (197 aa).

One can recognise a Guanylate kinase-like domain in the interval 6-191 (SKLIILSGPS…CVAQIEKIIS (186 aa)). 13 to 20 (GPSGVGKG) is an ATP binding site.

This sequence belongs to the guanylate kinase family.

The protein resides in the cytoplasm. It catalyses the reaction GMP + ATP = GDP + ADP. Its function is as follows. Essential for recycling GMP and indirectly, cGMP. This is Guanylate kinase from Mesomycoplasma hyopneumoniae (strain 232) (Mycoplasma hyopneumoniae).